The chain runs to 1055 residues: DIS3-like exonuclease 2 (1055 aa).

2 disordered regions span residues 1–109 (MKSA…SSPE) and 229–249 (SAAK…KARQ). The segment covering 17–32 (HKKKRNRPQKQNRRSK) has biased composition (basic residues). Basic and acidic residues predominate over residues 39 to 59 (EDAHVEESLDGRDSSRSKAKD). Low complexity predominate over residues 97-108 (PRRSASPLLSSP). Mg(2+) contacts are provided by aspartate 488 and aspartate 497.

Belongs to the RNR ribonuclease family. DIS3L2 subfamily. It depends on Mg(2+) as a cofactor. The cofactor is Mn(2+). Widely expressed.

It localises to the cytoplasm. The protein localises to the P-body. Its function is as follows. 3'-5'-exoribonuclease that specifically recognizes RNAs polyuridylated at their 3' end and mediates their degradation. Component of an exosome-independent RNA degradation pathway that mediates degradation of cytoplasmic mRNAs that have been deadenylated and subsequently uridylated at their 3'. The chain is DIS3-like exonuclease 2 (SOV) from Arabidopsis thaliana (Mouse-ear cress).